Reading from the N-terminus, the 554-residue chain is Glutamine--tRNA ligase (554 aa).

Residues 34-44 (PEPNGYLHIGH) carry the 'HIGH' region motif. ATP contacts are provided by residues 35–37 (EPN) and 41–47 (HIGHAKS). Asp67 and Tyr212 together coordinate L-glutamine. ATP-binding positions include Thr231, 261 to 262 (RL), and 269 to 271 (MSK). The 'KMSKS' region signature appears at 268-272 (VMSKR). Residues 317 to 324 (TKQDNTIE) are interaction with tRNA.

This sequence belongs to the class-I aminoacyl-tRNA synthetase family. Monomer.

The protein resides in the cytoplasm. The enzyme catalyses tRNA(Gln) + L-glutamine + ATP = L-glutaminyl-tRNA(Gln) + AMP + diphosphate. The chain is Glutamine--tRNA ligase from Shigella boydii serotype 18 (strain CDC 3083-94 / BS512).